A 377-amino-acid polypeptide reads, in one-letter code: WAT1-related protein At5g13670 (377 aa).

The next 10 helical transmembrane spans lie at 9–29 (FIAI…AKLA), 38–58 (VLVA…ALIL), 64–84 (PKLT…EPVV), 99–119 (TFTS…ACVF), 136–156 (VGTM…GNVI), 187–207 (IMLV…AKIL), 214–234 (LSLT…MGLI), 251–271 (LLAS…IGWA), 279–299 (FVSA…TFVF), and 303–323 (VYVG…LVLW). EamA domains follow at residues 18 to 149 (LYAL…MLMT) and 194 to 322 (FSWS…YLVL).

This sequence belongs to the drug/metabolite transporter (DMT) superfamily. Plant drug/metabolite exporter (P-DME) (TC 2.A.7.4) family.

The protein localises to the membrane. In Arabidopsis thaliana (Mouse-ear cress), this protein is WAT1-related protein At5g13670.